The primary structure comprises 602 residues: Alpha-glucosides permease MPH3 (602 aa).

Residues 1 to 106 are Cytoplasmic-facing; that stretch reads MKNLSFLINR…AAAWSLLVST (106 aa). A helical transmembrane segment spans residues 107–127; sequence TLIMEGYDTAILGAFYALPIF. Residues 128 to 142 are Extracellular-facing; the sequence is QRKFGSQNDKTGEWE. Residues 143-163 form a helical membrane-spanning segment; it reads ISASWQIGLTLCYMAGEIVGL. At 164 to 178 the chain is on the cytoplasmic side; it reads QLTGPSVDLVGNRYT. The helical transmembrane segment at 179–199 threads the bilayer; that stretch reads LIIALFFLAAFTFILYFCNSL. Residue G200 is a topological domain, extracellular. Residues 201–221 form a helical membrane-spanning segment; sequence MIAVGQALCGMPWGCFQCLTV. Residues 222–234 lie on the Cytoplasmic side of the membrane; sequence SYASEICPLALRY. A helical membrane pass occupies residues 235–255; sequence YLTTYSNLCWLFGQLFAAGIM. The Extracellular portion of the chain corresponds to 256–270; it reads KNSQKKYADSELGYK. A helical membrane pass occupies residues 271 to 291; the sequence is LPFALQWILPVPLALGIFFAP. At 292-363 the chain is on the cytoplasmic side; the sequence is ESPWWLVKKG…EDKINRRRTR (72 aa). The chain crosses the membrane as a helical span at residues 364 to 384; that stretch reads ITCLCWAGQATCGSILIGYST. Residues 385–397 lie on the Extracellular side of the membrane; the sequence is YFYEKAGVSTEMS. A helical transmembrane segment spans residues 398-418; sequence FTFSIIQYCLGICATFLSWWA. The Cytoplasmic segment spans residues 419–426; it reads SKYFGRYD. Residues 427 to 447 traverse the membrane as a helical segment; that stretch reads LYAFGLAFQTIVFFIIGGLGC. The Extracellular portion of the chain corresponds to 448–459; that stretch reads SSTHGSKMGSGS. Residues 460-480 form a helical membrane-spanning segment; it reads LLMAVAFFYNLGIAPVVFCLV. Residues 481–492 lie on the Cytoplasmic side of the membrane; sequence SEMPSSRLRTKT. Residues 493–513 traverse the membrane as a helical segment; that stretch reads IILARNTYNVVSIICSVLILY. Residues 514–525 are Extracellular-facing; sequence QLNSKKWNWGAK. Residues 526–546 traverse the membrane as a helical segment; it reads SGFFWGVLCFCTLIWAVVDLP. Topologically, residues 547 to 602 are cytoplasmic; it reads ETAGKTFVEINELFKLGVSARKFKSTKVDPFVVKTPPKDVSHNDPKGDIEASIAEE. Residues 582-595 are compositionally biased toward basic and acidic residues; the sequence is PPKDVSHNDPKGDI. The segment at 582–602 is disordered; it reads PPKDVSHNDPKGDIEASIAEE.

It belongs to the major facilitator superfamily. Sugar transporter (TC 2.A.1.1) family.

The protein localises to the cell membrane. Functionally, high-affinity uptake of maltose and maltotriose. Also transports alpha-methylglucoside, glucose and turanose but not melezitose or trehalose. This chain is Alpha-glucosides permease MPH3 (MPH3), found in Saccharomyces cerevisiae (strain ATCC 204508 / S288c) (Baker's yeast).